The sequence spans 187 residues: 5-formyltetrahydrofolate cyclo-ligase (187 aa).

ATP-binding positions include 6–10 (RQQIR), 139–146 (GMGGGFYD), and Asp178.

The protein belongs to the 5-formyltetrahydrofolate cyclo-ligase family.

The enzyme catalyses (6S)-5-formyl-5,6,7,8-tetrahydrofolate + ATP = (6R)-5,10-methenyltetrahydrofolate + ADP + phosphate. It participates in one-carbon metabolism; tetrahydrofolate interconversion. Functionally, involved in the removal of 5-formyltetrahydrofolate. In vitro, it is a potent inhibitor of various folate-dependent enzymes in the C1 metabolism network and in vivo it might function as a folate storage. 5-formyltetrahydrofolate is also used as an antifolate rescue agent in cancer chemotherapy. Catalyzes the irreversible ATP-dependent transformation of 5-formyltetrahydrofolate (5-CHO-THF) to form 5,10-methenyltetrahydrofolate (5,10-CH=THF). The reverse reaction is catalyzed by the serine hydroxymethyltransferase GlyA (SHMT). The sequence is that of 5-formyltetrahydrofolate cyclo-ligase from Haemophilus influenzae (strain ATCC 51907 / DSM 11121 / KW20 / Rd).